The chain runs to 408 residues: Zinc chaperone AztD (408 aa).

A signal peptide spans 1 to 21 (MLRHLAGASALALTLAGAGFA). The N-terminal Zn(2+)-binding motif; binds a third Zn(2+) with low affinity motif lies at 23-29 (DHDHDHE). The Zn(2+) site is built by His99, His102, Asp104, His124, His167, His218, and His408. A disulfide bond links Cys214 and Cys231.

In terms of assembly, monomer.

It is found in the periplasm. Acts as a zinc chaperone in the AztABCD zinc transport system. Directly transfers one zinc cation to the solute binding protein AztC; the transfer occurs without the formation of a stable interaction. Binds 3 Zn(2+), two with high affinity and one with low affinity, and transfers only Zn(2+) bound to site 2 to AztC. Likely functions to store zinc in the periplasm and may be important for zinc accumulation in zinc-limited environments. The protein is Zinc chaperone AztD of Paracoccus denitrificans (strain Pd 1222).